Consider the following 371-residue polypeptide: uncharacterized protein (371 aa).

His76 lines the Zn(2+) pocket. Asp78 is a catalytic residue. Asp106 contributes to the Zn(2+) binding site. The active-site Proton acceptor is Glu139. Residues Glu140, Asp163, and His344 each coordinate Zn(2+).

Belongs to the peptidase M20A family. Zn(2+) serves as cofactor.

Could be a peptidase. This is an uncharacterized protein from Bacillus subtilis (strain 168).